Consider the following 852-residue polypeptide: Protein Shroom1 (852 aa).

At M1 the chain carries N-acetylmethionine. S18 carries the post-translational modification Phosphoserine. Disordered stretches follow at residues 34 to 54 (SSFS…GTDL), 81 to 109 (TSPR…PLNR), and 125 to 218 (AAQA…ANQQ). T103 is modified (phosphothreonine). A compositionally biased stretch (low complexity) spans 125–144 (AAQAAEPPSPPASRAAYRQR). Residues S133 and S137 each carry the phosphoserine modification. An ASD1 domain is found at 145 to 233 (LQGAQRRVLR…SEPGKLDRVG (89 aa)). Residues 152-164 (VLRETSFQRKELR) are compositionally biased toward basic and acidic residues. 3 positions are modified to phosphoserine: S166, S190, and S224. Disordered regions lie at residues 276 to 320 (LPET…GSGG), 399 to 431 (MRSP…QRTG), 464 to 496 (SRPT…TAAE), and 823 to 852 (DLGH…LLLT). Residues 279-289 (TQPQGSMNLDS) are compositionally biased toward polar residues. A compositionally biased stretch (low complexity) spans 301–313 (ASRSRSASGEVLG). A compositionally biased stretch (polar residues) spans 465–479 (RPTSHTPTGTANDNI). Residues 543–825 (EELVQELARL…QLDAIRDDLG (283 aa)) form the ASD2 domain. Positions 830–852 (SPSPARPPGTCPPVQPPFPLLLT) are enriched in pro residues.

This sequence belongs to the shroom family. As to quaternary structure, interacts with F-actin.

It localises to the cytoplasm. Its subcellular location is the cytoskeleton. Functionally, may be involved in the assembly of microtubule arrays during cell elongation. The sequence is that of Protein Shroom1 (SHROOM1) from Homo sapiens (Human).